Consider the following 178-residue polypeptide: Large ribosomal subunit protein uL6 (178 aa).

This sequence belongs to the universal ribosomal protein uL6 family. As to quaternary structure, part of the 50S ribosomal subunit.

Functionally, this protein binds to the 23S rRNA, and is important in its secondary structure. It is located near the subunit interface in the base of the L7/L12 stalk, and near the tRNA binding site of the peptidyltransferase center. This is Large ribosomal subunit protein uL6 from Thermoplasma volcanium (strain ATCC 51530 / DSM 4299 / JCM 9571 / NBRC 15438 / GSS1).